We begin with the raw amino-acid sequence, 342 residues long: tRNA N6-adenosine threonylcarbamoyltransferase (342 aa).

Positions 111 and 115 each coordinate Fe cation. Residues 134 to 138 (LVSGG), Asp-167, Gly-180, and Asn-277 each bind substrate. A Fe cation-binding site is contributed by Asp-305.

It belongs to the KAE1 / TsaD family. The cofactor is Fe(2+).

It localises to the cytoplasm. The catalysed reaction is L-threonylcarbamoyladenylate + adenosine(37) in tRNA = N(6)-L-threonylcarbamoyladenosine(37) in tRNA + AMP + H(+). Functionally, required for the formation of a threonylcarbamoyl group on adenosine at position 37 (t(6)A37) in tRNAs that read codons beginning with adenine. Is involved in the transfer of the threonylcarbamoyl moiety of threonylcarbamoyl-AMP (TC-AMP) to the N6 group of A37, together with TsaE and TsaB. TsaD likely plays a direct catalytic role in this reaction. In Haemophilus influenzae (strain ATCC 51907 / DSM 11121 / KW20 / Rd), this protein is tRNA N6-adenosine threonylcarbamoyltransferase.